Consider the following 393-residue polypeptide: 2,3,4,5-tetrahydropyridine-2,6-dicarboxylate N-succinyltransferase (393 aa).

Residue Glu-261 is the Acyl-anhydride intermediate of the active site. Residues Arg-263, Gly-278, Ser-281, Ala-304, 319–320 (DA), Gly-327, Lys-356, and 369–372 (RQDS) each bind succinyl-CoA.

This sequence belongs to the type 2 tetrahydrodipicolinate N-succinyltransferase family. As to quaternary structure, homotrimer.

The protein localises to the cytoplasm. It catalyses the reaction (S)-2,3,4,5-tetrahydrodipicolinate + succinyl-CoA + H2O = (S)-2-succinylamino-6-oxoheptanedioate + CoA. It functions in the pathway amino-acid biosynthesis; L-lysine biosynthesis via DAP pathway; LL-2,6-diaminopimelate from (S)-tetrahydrodipicolinate (succinylase route): step 1/3. Functionally, catalyzes the conversion of the cyclic tetrahydrodipicolinate (THDP) into the acyclic N-succinyl-L-2-amino-6-oxopimelate using succinyl-CoA. In Nitratiruptor sp. (strain SB155-2), this protein is 2,3,4,5-tetrahydropyridine-2,6-dicarboxylate N-succinyltransferase.